Reading from the N-terminus, the 384-residue chain is Odorant receptor 46a, isoform B (384 aa).

Residues 1 to 37 (MVTEDFYKYQVWYFQILGVWQLPTWAADHQRRFQSMR) are Cytoplasmic-facing. The chain crosses the membrane as a helical span at residues 38 to 58 (FGFILVILFIMLLLFSFEMLN). Asn59 carries N-linked (GlcNAc...) asparagine glycosylation. Residues 59-65 (NISQVRE) are Extracellular-facing. Residues 66-86 (ILKVFFMFATEISCMAKLLHL) traverse the membrane as a helical segment. The Cytoplasmic portion of the chain corresponds to 87-130 (KLKSRKLAGLVDAMLSPEFGVKSEQEMQMLELDRVAVVRMRNSY). The chain crosses the membrane as a helical span at residues 131–151 (GIMSLGAASLILIVPCFDNFG). The Extracellular segment spans residues 152–165 (ELPLAMLEVCSIEG). A helical transmembrane segment spans residues 166 to 186 (WICYWSQYLFHSICLLPTCVL). Residues 187 to 247 (NITYDSVAYS…YNRIVRFKDL (61 aa)) are Cytoplasmic-facing. Residues 248-268 (VELFIKGPGSVQLMCSVLVLV) form a helical membrane-spanning segment. At 269–283 (SNLYDMSTMSIANGD) the chain is on the extracellular side. A helical transmembrane segment spans residues 284–304 (AIFMLKTCIYQLVMLWQIFII). At 305-348 (CYASNEVTVQSSRLCHSIYSSQWTGWNRANRRIVLLMMQRFNSP) the chain is on the cytoplasmic side. A helical membrane pass occupies residues 349–369 (MLLSTFNPTFAFSLEAFGSIV). An N-linked (GlcNAc...) asparagine glycan is attached at Asn370. The Extracellular segment spans residues 370–384 (NCSYSYFALLKRVNS).

It belongs to the insect chemoreceptor superfamily. Heteromeric odorant receptor channel (TC 1.A.69) family. Or2a subfamily. As to quaternary structure, interacts with Orco. Complexes exist early in the endomembrane system in olfactory sensory neurons (OSNs), coupling these complexes to the conserved ciliary trafficking pathway. Isoform B is expressed in the antenna.

It localises to the cell membrane. In terms of biological role, odorant receptor which mediates acceptance or avoidance behavior, depending on its substrates. The odorant receptor repertoire encodes a large collection of odor stimuli that vary widely in identity, intensity, and duration. May form a complex with Orco to form odorant-sensing units, providing sensitive and prolonged odorant signaling and calcium permeability. The chain is Odorant receptor 46a, isoform B (Or46a) from Drosophila melanogaster (Fruit fly).